The following is a 342-amino-acid chain: Anthranilate phosphoribosyltransferase (342 aa).

Residues Gly-81, 84–85 (GD), Thr-89, 91–94 (NVST), 109–117 (KHGNRAASS), and Ala-121 contribute to the 5-phospho-alpha-D-ribose 1-diphosphate site. Gly-81 contacts anthranilate. Residue Ser-93 coordinates Mg(2+). Asn-112 is a binding site for anthranilate. Arg-167 serves as a coordination point for anthranilate. Positions 226 and 227 each coordinate Mg(2+).

Belongs to the anthranilate phosphoribosyltransferase family. Homodimer. Requires Mg(2+) as cofactor.

It catalyses the reaction N-(5-phospho-beta-D-ribosyl)anthranilate + diphosphate = 5-phospho-alpha-D-ribose 1-diphosphate + anthranilate. The protein operates within amino-acid biosynthesis; L-tryptophan biosynthesis; L-tryptophan from chorismate: step 2/5. Catalyzes the transfer of the phosphoribosyl group of 5-phosphorylribose-1-pyrophosphate (PRPP) to anthranilate to yield N-(5'-phosphoribosyl)-anthranilate (PRA). The polypeptide is Anthranilate phosphoribosyltransferase (Beijerinckia indica subsp. indica (strain ATCC 9039 / DSM 1715 / NCIMB 8712)).